The primary structure comprises 282 residues: Light-independent protochlorophyllide reductase iron-sulfur ATP-binding protein (282 aa).

Residues 10–15 (GIGKST) and K39 each bind ATP. S14 is a binding site for Mg(2+). [4Fe-4S] cluster is bound by residues C95 and C129. Position 180–181 (180–181 (NR)) interacts with ATP.

The protein belongs to the NifH/BchL/ChlL family. As to quaternary structure, homodimer. Protochlorophyllide reductase is composed of three subunits; ChlL, ChlN and ChlB. [4Fe-4S] cluster is required as a cofactor.

Its subcellular location is the plastid. It localises to the cyanelle. The catalysed reaction is chlorophyllide a + oxidized 2[4Fe-4S]-[ferredoxin] + 2 ADP + 2 phosphate = protochlorophyllide a + reduced 2[4Fe-4S]-[ferredoxin] + 2 ATP + 2 H2O. Its pathway is porphyrin-containing compound metabolism; chlorophyll biosynthesis (light-independent). Its function is as follows. Component of the dark-operative protochlorophyllide reductase (DPOR) that uses Mg-ATP and reduced ferredoxin to reduce ring D of protochlorophyllide (Pchlide) to form chlorophyllide a (Chlide). This reaction is light-independent. The L component serves as a unique electron donor to the NB-component of the complex, and binds Mg-ATP. The chain is Light-independent protochlorophyllide reductase iron-sulfur ATP-binding protein from Cyanophora paradoxa.